A 502-amino-acid polypeptide reads, in one-letter code: MADKADKMKARLPRGFVDRVPDDLRAAEKMMATIREVYDLYGFEPVETPLVEYTDALGKFLPDQDRPNEGVFSFQDDDEQWLSLRYDLTAPLARYVAENFETLPKPYRSYRNGWVFRNEKPGPGRFRQFMQFDADTVGAPNVSADAEMCMMMADALERLGIQRGDYAIRVNNRKVLDGVLDAIGLEGEGNAAKRLNVLRAIDKLDKFGPEGVRLLLGKGRLDESGDFTKGAQLPEAAIEKVLAFTAAGGADGAQTIANLQAVVAGNAKGEEGVQELADMQALFFAGGYEGRVKIDPSVVRGLEYYTGPVFEAELLFDVTNEDGQKVVFGSVGGGGRYDGLVSRFRGEPVPATGFSIGVSRLMTALKNLGKLDVSDTVGPVVVLVMDKDTQNLGRYQKMVSDLRKAGIRAEMYVGGSGMKAQMKYADRRAAPCVVIQGSQEREAGEVQIKDLVEGKRLSAEIEDNVTWRESRPAQITVREDGLVDAVREILDAQARDRAEQSK.

Belongs to the class-II aminoacyl-tRNA synthetase family. Homodimer.

It localises to the cytoplasm. The catalysed reaction is tRNA(His) + L-histidine + ATP = L-histidyl-tRNA(His) + AMP + diphosphate + H(+). The chain is Histidine--tRNA ligase from Brucella ovis (strain ATCC 25840 / 63/290 / NCTC 10512).